A 407-amino-acid polypeptide reads, in one-letter code: Substance-P receptor (407 aa).

The Extracellular segment spans residues 1–31 (MDNVLPMDSDLFPNISTNTSESNQFVQPTWQ). N-linked (GlcNAc...) asparagine glycans are attached at residues Asn14 and Asn18. Residues 32 to 54 (IVLWAAAYTVIVVTSVVGNVVVI) form a helical membrane-spanning segment. Residues 55-64 (WIILAHKRMR) lie on the Cytoplasmic side of the membrane. A helical transmembrane segment spans residues 65–86 (TVTNYFLVNLAFAEACMAAFNT). At 87-106 (VVNFTYAVHNVWYYGLFYCK) the chain is on the extracellular side. Cys105 and Cys180 are joined by a disulfide. Residues 107–128 (FHNFFPIAALFASIYSMTAVAF) traverse the membrane as a helical segment. Residues 129 to 148 (DRYMAIIHPLQPRLSATATK) lie on the Cytoplasmic side of the membrane. Residues 149-169 (VVIFVIWVLALLLAFPQGYYS) form a helical membrane-spanning segment. The Extracellular segment spans residues 170 to 194 (TTETMPSRVVCMIEWPEHPNRTYEK). Residues 195-219 (AYHICVTVLIYFLPLLVIGYAYTVV) form a helical membrane-spanning segment. At 220-248 (GITLWASEIPGDSSDRYHEQVSAKRKVVK) the chain is on the cytoplasmic side. A helical transmembrane segment spans residues 249–270 (MMIVVVCTFAICWLPFHVFFLL). Residues 271 to 283 (PYINPDLYLKKFI) lie on the Extracellular side of the membrane. The helical transmembrane segment at 284-308 (QQVYLASMWLAMSSTMYNPIIYCCL) threads the bilayer. Residues 309–407 (NDRFRLGFKH…SSSFYSNMLA (99 aa)) lie on the Cytoplasmic side of the membrane. A lipid anchor (S-palmitoyl cysteine) is attached at Cys322. Residues 362–407 (VGAHEEEPEEGPKATPSSLDLTSNGSSRSNSKTMTESSSFYSNMLA) form a disordered region. Residues 376–407 (TPSSLDLTSNGSSRSNSKTMTESSSFYSNMLA) show a composition bias toward polar residues.

This sequence belongs to the G-protein coupled receptor 1 family. Interacts with ARRB1.

It is found in the cell membrane. Its function is as follows. This is a receptor for the tachykinin neuropeptide substance P. It is probably associated with G proteins that activate a phosphatidylinositol-calcium second messenger system. The rank order of affinity of this receptor to tachykinins is: substance P &gt; substance K &gt; neuromedin-K. This chain is Substance-P receptor (Tacr1), found in Rattus norvegicus (Rat).